A 178-amino-acid polypeptide reads, in one-letter code: Endothelin-2 (178 aa).

The first 24 residues, 1–24, serve as a signal peptide directing secretion; it reads MVSVPTTWCSVALALLVALHEGKG. Residues 25–46 constitute a propeptide that is removed on maturation; sequence QAAATLEQPASSSHAQGTHLRL. Cystine bridges form between cysteine 49–cysteine 63 and cysteine 51–cysteine 59. Residues 70-178 constitute a propeptide that is removed on maturation; the sequence is VNTPEQTAPY…RSTHSRWRKR (109 aa). The tract at residues 96-111 is endothelin-like; sequence CQCSSARDPACATFCL. Residues 159-178 form a disordered region; sequence KRQQEAMREPRSTHSRWRKR. Basic and acidic residues predominate over residues 160 to 170; that stretch reads RQQEAMREPRS.

This sequence belongs to the endothelin/sarafotoxin family. In terms of tissue distribution, expressed in lung, but not in placental stem villi vessels or cultured placental villi smooth muscle cells.

The protein localises to the secreted. Endothelins are endothelium-derived vasoconstrictor peptides. This is Endothelin-2 (EDN2) from Homo sapiens (Human).